Consider the following 192-residue polypeptide: Ion-translocating oxidoreductase complex subunit B (192 aa).

Residues 1-26 (MSTIWIAIAALSALALAFGLVLGYAS) form a hydrophobic region. The 4Fe-4S domain maps to 32-91 (ENDPIVEEVEAMLPQSQCGQCGYPGCRPYAEAVALNGENINKCGPGGEAMMLKLAEKLNV). Residues C49, C52, C57, C74, C117, C120, C123, C127, C147, C150, C153, and C157 each coordinate [4Fe-4S] cluster. 4Fe-4S ferredoxin-type domains are found at residues 108 to 137 (QVAW…GSTK) and 138 to 167 (AVHT…LRPI).

The protein belongs to the 4Fe4S bacterial-type ferredoxin family. RnfB subfamily. The complex is composed of six subunits: RnfA, RnfB, RnfC, RnfD, RnfE and RnfG. Requires [4Fe-4S] cluster as cofactor.

Its subcellular location is the cell inner membrane. Functionally, part of a membrane-bound complex that couples electron transfer with translocation of ions across the membrane. This Pectobacterium carotovorum subsp. carotovorum (strain PC1) protein is Ion-translocating oxidoreductase complex subunit B.